A 228-amino-acid polypeptide reads, in one-letter code: Ribosomal RNA small subunit methyltransferase G (228 aa).

S-adenosyl-L-methionine is bound by residues glycine 82, leucine 87, aspartate 105–threonine 107, valine 133–glutamate 134, and arginine 147.

It belongs to the methyltransferase superfamily. RNA methyltransferase RsmG family.

Its subcellular location is the cytoplasm. Functionally, specifically methylates the N7 position of a guanine in 16S rRNA. The sequence is that of Ribosomal RNA small subunit methyltransferase G from Pelodictyon phaeoclathratiforme (strain DSM 5477 / BU-1).